A 202-amino-acid polypeptide reads, in one-letter code: MEHYISIFVRSIFMENMALAFFLGMCTFLAVSKKVKTSMGLGVAVIVVLGISVPVNQIIYFNLLAPGALAWAGFPAADLSFLGFITFIGVIAALVQILEMVLDKYFPALYQALGIYLPLITVNCAILGGVLFMVQREYNLMESLVYGVGSGVGWMLAIVLLAGIREKMKYSDVPAGLRGLGITFTTAGLMAIAFMSFSGIQL.

6 helical membrane passes run 11-31 (SIFM…FLAV), 41-61 (LGVA…IIYF), 81-101 (FLGF…LEMV), 114-134 (GIYL…LFMV), 144-164 (LVYG…LAGI), and 180-200 (LGIT…FSGI).

Belongs to the NqrDE/RnfAE family. In terms of assembly, composed of six subunits; NqrA, NqrB, NqrC, NqrD, NqrE and NqrF.

It localises to the cell inner membrane. The catalysed reaction is a ubiquinone + n Na(+)(in) + NADH + H(+) = a ubiquinol + n Na(+)(out) + NAD(+). In terms of biological role, NQR complex catalyzes the reduction of ubiquinone-1 to ubiquinol by two successive reactions, coupled with the transport of Na(+) ions from the cytoplasm to the periplasm. NqrA to NqrE are probably involved in the second step, the conversion of ubisemiquinone to ubiquinol. This Psychromonas ingrahamii (strain DSM 17664 / CCUG 51855 / 37) protein is Na(+)-translocating NADH-quinone reductase subunit E.